The primary structure comprises 186 residues: MRRNGDGEEVVAKRRRRIKELVQVALRGGCLAASATAMAVMLTATEEGVADIYGFKLTLSSNWSFSPSYQYVVGACTGTVLYSLFQLCLGVYRLLTGSPITPSRFQAWLCFTSDQLFGYLMMSAGSAGSGVTNLNKTGIRHTPLPDFCKTLSSFCNHVALSLLLVFLSFIFLASSSFFTVLVLSTP.

The Cytoplasmic portion of the chain corresponds to Met-1–Gln-23. The chain crosses the membrane as a helical span at residues Val-24–Ala-44. At Thr-45–Gln-70 the chain is on the extracellular side. A glycan (N-linked (GlcNAc...) asparagine) is linked at Asn-62. A helical transmembrane segment spans residues Tyr-71–Val-91. At Tyr-92–Gln-115 the chain is on the cytoplasmic side. Residues Leu-116 to Thr-132 form a helical membrane-spanning segment. Residues Asn-133–Ser-161 lie on the Extracellular side of the membrane. Asn-135 carries N-linked (GlcNAc...) asparagine glycosylation. Residues Leu-162 to Val-182 traverse the membrane as a helical segment. At Leu-183–Pro-186 the chain is on the cytoplasmic side.

Belongs to the Casparian strip membrane proteins (CASP) family. In terms of assembly, homodimer and heterodimers.

The protein resides in the cell membrane. The polypeptide is CASP-like protein ARALYDRAFT_316979 (Arabidopsis lyrata subsp. lyrata (Lyre-leaved rock-cress)).